The sequence spans 207 residues: uncharacterized protein (207 aa).

This is an uncharacterized protein from Haemophilus influenzae (strain ATCC 51907 / DSM 11121 / KW20 / Rd).